We begin with the raw amino-acid sequence, 566 residues long: Transmembrane protein 151B (566 aa).

Residues 1–11 (MSPPGSAAGES) are compositionally biased toward low complexity. Residues 1-25 (MSPPGSAAGESAAGGGGGGGGPGVS) form a disordered region. Positions 12–23 (AAGGGGGGGGPG) are enriched in gly residues. 2 consecutive transmembrane segments (helical) span residues 65–85 (CLLLSLLMYGCLGAVAWCHVT) and 112–132 (YVYIPLAFLLMLYAVYLVECW). Polar residues predominate over residues 495–512 (VNEASCPTEQTRLSSQAS). Positions 495–529 (VNEASCPTEQTRLSSQASMGDDEDDDEEEAGPPPP) are disordered. Acidic residues predominate over residues 514–524 (GDDEDDDEEEA).

Belongs to the TMEM151 family.

Its subcellular location is the membrane. This is Transmembrane protein 151B (TMEM151B) from Homo sapiens (Human).